The primary structure comprises 259 residues: Type III pantothenate kinase (259 aa).

6–13 (DCGNTNTV) contributes to the ATP binding site. Residue 107-110 (GPDR) participates in substrate binding. Asp109 (proton acceptor) is an active-site residue. Asp129 lines the K(+) pocket. ATP is bound at residue Thr132. Thr184 provides a ligand contact to substrate.

This sequence belongs to the type III pantothenate kinase family. Homodimer. NH4(+) serves as cofactor. Requires K(+) as cofactor.

The protein localises to the cytoplasm. It catalyses the reaction (R)-pantothenate + ATP = (R)-4'-phosphopantothenate + ADP + H(+). It functions in the pathway cofactor biosynthesis; coenzyme A biosynthesis; CoA from (R)-pantothenate: step 1/5. Its function is as follows. Catalyzes the phosphorylation of pantothenate (Pan), the first step in CoA biosynthesis. This chain is Type III pantothenate kinase, found in Jannaschia sp. (strain CCS1).